The primary structure comprises 336 residues: Anthranilate phosphoribosyltransferase (336 aa).

Residues Gly-82, 85–86 (GD), Thr-90, 92–95 (NIST), 110–118 (KHGNRSVSS), and Ser-122 each bind 5-phospho-alpha-D-ribose 1-diphosphate. Position 82 (Gly-82) interacts with anthranilate. Ser-94 provides a ligand contact to Mg(2+). An anthranilate-binding site is contributed by Asn-113. Arg-168 lines the anthranilate pocket. Asp-227 and Glu-228 together coordinate Mg(2+).

This sequence belongs to the anthranilate phosphoribosyltransferase family. As to quaternary structure, homodimer. Mg(2+) is required as a cofactor.

The enzyme catalyses N-(5-phospho-beta-D-ribosyl)anthranilate + diphosphate = 5-phospho-alpha-D-ribose 1-diphosphate + anthranilate. It participates in amino-acid biosynthesis; L-tryptophan biosynthesis; L-tryptophan from chorismate: step 2/5. Catalyzes the transfer of the phosphoribosyl group of 5-phosphorylribose-1-pyrophosphate (PRPP) to anthranilate to yield N-(5'-phosphoribosyl)-anthranilate (PRA). The polypeptide is Anthranilate phosphoribosyltransferase (Leptospira interrogans serogroup Icterohaemorrhagiae serovar copenhageni (strain Fiocruz L1-130)).